A 447-amino-acid chain; its full sequence is UPF0210 protein LEUM_1180 (447 aa).

It belongs to the UPF0210 family. Homodimer.

In Leuconostoc mesenteroides subsp. mesenteroides (strain ATCC 8293 / DSM 20343 / BCRC 11652 / CCM 1803 / JCM 6124 / NCDO 523 / NBRC 100496 / NCIMB 8023 / NCTC 12954 / NRRL B-1118 / 37Y), this protein is UPF0210 protein LEUM_1180.